The chain runs to 81 residues: Defensin-like protein 153 (81 aa).

An N-terminal signal peptide occupies residues 1–26 (MKNVSQVSVAVLLIFSILVLGIGVQG). 4 disulfides stabilise this stretch: Cys-30-Cys-81, Cys-41-Cys-60, Cys-46-Cys-75, and Cys-50-Cys-77.

This sequence belongs to the DEFL family.

It is found in the secreted. The polypeptide is Defensin-like protein 153 (LCR31) (Arabidopsis thaliana (Mouse-ear cress)).